We begin with the raw amino-acid sequence, 501 residues long: ATP synthase subunit alpha (501 aa).

Position 169-176 (169-176 (GDRQTGKT)) interacts with ATP.

It belongs to the ATPase alpha/beta chains family. As to quaternary structure, F-type ATPases have 2 components, CF(1) - the catalytic core - and CF(0) - the membrane proton channel. CF(1) has five subunits: alpha(3), beta(3), gamma(1), delta(1), epsilon(1). CF(0) has three main subunits: a(1), b(2) and c(9-12). The alpha and beta chains form an alternating ring which encloses part of the gamma chain. CF(1) is attached to CF(0) by a central stalk formed by the gamma and epsilon chains, while a peripheral stalk is formed by the delta and b chains.

It localises to the cell membrane. The enzyme catalyses ATP + H2O + 4 H(+)(in) = ADP + phosphate + 5 H(+)(out). Its function is as follows. Produces ATP from ADP in the presence of a proton gradient across the membrane. The alpha chain is a regulatory subunit. The polypeptide is ATP synthase subunit alpha (Streptococcus pyogenes serotype M2 (strain MGAS10270)).